The primary structure comprises 217 residues: Large ribosomal subunit protein uL1 (217 aa).

Belongs to the universal ribosomal protein uL1 family. Part of the 50S ribosomal subunit.

In terms of biological role, binds directly to 23S rRNA. Probably involved in E site tRNA release. Functionally, protein L1 is also a translational repressor protein, it controls the translation of its operon by binding to its mRNA. The protein is Large ribosomal subunit protein uL1 of Thermoplasma volcanium (strain ATCC 51530 / DSM 4299 / JCM 9571 / NBRC 15438 / GSS1).